A 369-amino-acid chain; its full sequence is Mitogen-activated protein kinase 4 (369 aa).

The Protein kinase domain maps to 32–319 (YVPIKPIGRG…VTEALEHPYM (288 aa)). Residues 38–46 (IGRGAYGIV) and K61 each bind ATP. D158 functions as the Proton acceptor in the catalytic mechanism. Phosphothreonine is present on T191. A TXY motif is present at residues 191 to 193 (TEY). Y193 is subject to Phosphotyrosine.

Belongs to the protein kinase superfamily. CMGC Ser/Thr protein kinase family. MAP kinase subfamily. Dually phosphorylated on Thr-191 and Tyr-193, which activates the enzyme. In terms of tissue distribution, expressed in leaves and panicles.

It catalyses the reaction L-seryl-[protein] + ATP = O-phospho-L-seryl-[protein] + ADP + H(+). The enzyme catalyses L-threonyl-[protein] + ATP = O-phospho-L-threonyl-[protein] + ADP + H(+). Activated by threonine and tyrosine phosphorylation. This Oryza sativa subsp. japonica (Rice) protein is Mitogen-activated protein kinase 4 (MPK4).